The primary structure comprises 504 residues: Zinc finger CCCH-type with G patch domain-containing protein (504 aa).

Residues 95–121 are disordered; sequence LSEDSNEVKPNPDTDEENEEEEQDISG. Residues 107–118 are compositionally biased toward acidic residues; the sequence is DTDEENEEEEQD. A C3H1-type zinc finger spans residues 165-191; sequence KSMKPCGFYLEGKCRFMDNCRYSHGEV. Residues 308–354 enclose the G-patch domain; sequence TRGIGSKLLMKMGYELGKGLGKTLSGRVEPVQAVVLPKGHSLDICAE.

It is found in the nucleus. Transcription repressor that specifically binds the 5'-GGAG[GA]A[GA]A-3' consensus sequence. Represses transcription by recruiting the chromatin multiprotein complex NuRD to target promoters. Negatively regulates expression of EGFR, a gene involved in cell proliferation, survival and migration. This chain is Zinc finger CCCH-type with G patch domain-containing protein (zgpat), found in Danio rerio (Zebrafish).